Consider the following 42-residue polypeptide: Beta-defensin 6 (42 aa).

Residue Q1 is modified to Pyrrolidone carboxylic acid. 3 disulfides stabilise this stretch: C9/C38, C16/C31, and C21/C39.

Belongs to the beta-defensin family. In terms of tissue distribution, neutrophilic granules.

The protein resides in the secreted. Its function is as follows. Has bactericidal activity. Active against E.coli ML35 and S.aureus 502A. The polypeptide is Beta-defensin 6 (DEFB6) (Bos taurus (Bovine)).